We begin with the raw amino-acid sequence, 862 residues long: Active breakpoint cluster region-related protein (862 aa).

Positions 30–84 (DAEGNEEHKSSREGSETMPYIDESPTMSPQLSARSQDSVDGVSPTPTEVLLPGGE) are disordered. Over residues 34 to 44 (NEEHKSSREGS) the composition is skewed to basic and acidic residues. Polar residues predominate over residues 54–67 (PTMSPQLSARSQDS). The region spanning 93–286 (MRKLVLSGVL…QNFLSSINED (194 aa)) is the DH domain. Positions 303 to 462 (QLVKDGFLVE…WREAIQKLQK (160 aa)) constitute a PH domain. Residues 488–616 (VHNVPIISHK…QSKNWHDDVI (129 aa)) form the C2 domain. One can recognise a Rho-GAP domain in the interval 650–848 (VKISVVTKRE…YYLQHPPISF (199 aa)).

Its subcellular location is the cell projection. It localises to the dendritic spine. The protein resides in the axon. The protein localises to the synapse. Protein with a unique structure having two opposing regulatory activities toward small GTP-binding proteins. The C-terminus is a GTPase-activating protein domain which stimulates GTP hydrolysis by RAC1, RAC2 and CDC42. Accelerates the intrinsic rate of GTP hydrolysis of RAC1 or CDC42, leading to down-regulation of the active GTP-bound form. The central Dbl homology (DH) domain functions as guanine nucleotide exchange factor (GEF) that modulates the GTPases CDC42, RHOA and RAC1. Promotes the conversion of CDC42, RHOA and RAC1 from the GDP-bound to the GTP-bound form. This chain is Active breakpoint cluster region-related protein (abr), found in Xenopus tropicalis (Western clawed frog).